The sequence spans 406 residues: Succinylornithine transaminase (406 aa).

At K252 the chain carries N6-(pyridoxal phosphate)lysine.

It belongs to the class-III pyridoxal-phosphate-dependent aminotransferase family. AstC subfamily. Pyridoxal 5'-phosphate is required as a cofactor.

It carries out the reaction N(2)-succinyl-L-ornithine + 2-oxoglutarate = N-succinyl-L-glutamate 5-semialdehyde + L-glutamate. It participates in amino-acid degradation; L-arginine degradation via AST pathway; L-glutamate and succinate from L-arginine: step 3/5. In terms of biological role, catalyzes the transamination of N(2)-succinylornithine and alpha-ketoglutarate into N(2)-succinylglutamate semialdehyde and glutamate. Can also act as an acetylornithine aminotransferase. In Shigella boydii serotype 18 (strain CDC 3083-94 / BS512), this protein is Succinylornithine transaminase.